The chain runs to 431 residues: Serine--tRNA ligase (431 aa).

An L-serine-binding site is contributed by 238 to 240; sequence TSE. 269–271 contributes to the ATP binding site; it reads RSE. Residue Glu-292 participates in L-serine binding. Residue 356–359 participates in ATP binding; sequence EISS. Residue Ser-391 coordinates L-serine.

It belongs to the class-II aminoacyl-tRNA synthetase family. Type-1 seryl-tRNA synthetase subfamily. In terms of assembly, homodimer. The tRNA molecule binds across the dimer.

The protein localises to the cytoplasm. The catalysed reaction is tRNA(Ser) + L-serine + ATP = L-seryl-tRNA(Ser) + AMP + diphosphate + H(+). It carries out the reaction tRNA(Sec) + L-serine + ATP = L-seryl-tRNA(Sec) + AMP + diphosphate + H(+). It participates in aminoacyl-tRNA biosynthesis; selenocysteinyl-tRNA(Sec) biosynthesis; L-seryl-tRNA(Sec) from L-serine and tRNA(Sec): step 1/1. Catalyzes the attachment of serine to tRNA(Ser). Is also able to aminoacylate tRNA(Sec) with serine, to form the misacylated tRNA L-seryl-tRNA(Sec), which will be further converted into selenocysteinyl-tRNA(Sec). This Leptothrix cholodnii (strain ATCC 51168 / LMG 8142 / SP-6) (Leptothrix discophora (strain SP-6)) protein is Serine--tRNA ligase.